A 905-amino-acid polypeptide reads, in one-letter code: MATPSMLPQWSYMHIAGQDAAEYLSPALVQFAQATSSYFKLDNKFRNPTVAPTHDVTTERSQRLQLRFVPVMQEDGQYTYKTRFQLAVGDNRVLDMASTYFDIRGTLDRGPSFKPYSGTAYNALAPRAGANNCLFNGSGANINTLAQVPFAGAITVNGQAAVTDNTYQPEPQLGPESWVDGTLADLGDASGRALKASTPRMPCYGSYAPPTNENGGQATGAVERRFYKVTANNNNEADALLYTEDVNLQTPDTHLVHQVSDDQVTGVQGLGQQAAPNRPNYIGFRDNFIGLMYYNSNGNLGVLAGQSSQLNAVVDLQDRNTELSYQLLLDALTDRSRYFSMWNQAVDSYDQDVRIIDNHGVEDDMPNYCFPLSGMGPLTNMTAMKVNNQNFQTDNTNVGPIQKIGFGNVEAMEINLNANLFKGFLYSNVALYLPDAYKYTPDNIVAPANANTYAYMNVRLPAANLIDTFVNIGARWSPDVMDSVNPFNHHRNAGLRYRSQLLGNGRYCSFHIQVPQKFFAIKNLLLLPGTYTYEWSFRKDVNMILQSSLGNDLRVDGASINIQSINLYASFFPMAHNTASTLEAMLRNDVNDQSFADYLSAANMLYPIPANTTNLPISIPARNWAGFRGWSFTRIKQRETPALGSPYDPYFTYSGSIPYLDSTFYLSHTFRRVSIMFDSSVSWPGNDRLLTPNEFEIKRYVDGEGYNVAQSNMTKDWFLVQMLAHYNIGYQGYHLPESYKDRMYSFLRNFEPMCRQLVDVTNYATYQSVTVGHQHNNSGYASPLSTFNPREGHPYPANWPYPLIGVNAVPTVTQKKFLCDRTLWRIPFSSNFMSMGTLTDLGQNLLYSNSAHALDMTFEVDAMNEPTLLYVLFEVFDVARVHQPHRGVIEVVYLRTPFSAGNATT.

N-acetylalanine; by host is present on alanine 2. At tyrosine 893 the chain carries Phosphotyrosine; by host.

Belongs to the adenoviridae hexon protein family. As to quaternary structure, homotrimer. Interacts with the capsid vertex protein; this interaction binds the peripentonal hexons to the neighboring penton base. Interacts with the hexon-linking protein; this interaction tethers the hexons surrounding the penton to those situated in the central plate of the facet. Interacts with the hexon-interlacing protein; this interaction lashes the hexons together. Interacts with host dyneins DYNC1LI1 and DYNC1I2; this interaction might be involved in intracellular microtubule-dependent transport of incoming viral capsid. Interacts with the shutoff protein; this interaction allows folding and formation of hexons trimers. Interacts with pre-protein VI; this interaction probably allows nuclear import of hexon trimers and possibly pre-capsid assembly.

The protein localises to the virion. It localises to the host nucleus. Functionally, major capsid protein that self-associates to form 240 hexon trimers, each in the shape of a hexagon, building most of the pseudo T=25 capsid. Assembled into trimeric units with the help of the chaperone shutoff protein. Transported by pre-protein VI to the nucleus where it associates with other structural proteins to form an empty capsid. Might be involved, through its interaction with host dyneins, in the intracellular microtubule-dependent transport of incoming viral capsid to the nucleus. This Canis lupus familiaris (Dog) protein is Hexon protein.